A 524-amino-acid chain; its full sequence is MVRRALVSVSDKTGLVPFAKRLAALGVEILSTGGTQRALADAGVPVVSVGDYTQAPEILAGRVKTLHPRVHGGILYRRGLASDEADVKARDIPPIDLVVVNLYPFREAVAAGKPFWDCVEEIDIGGPTMVRSAAKNAAHVGVVVDPADYERVAAELEASRALSDQTRFELMKKAFAHTAAYDAAISEFLTARESTDAQAKRFPATLAAVYSKAGDLRYGENPHQAGAFYRAGREPDEPTVAFAKVLQGKELSYNNLLDLEAALAAVKEHDEVACVVIKHNTPCGVSLGKTPAEAFARARACDPVSAFGGIVALNRPVDAAAAKELTDLFLECVIAPGYDEAARAALGAKKNLRLLEAPRLAEPRTSWTRRPEELRELRSIPGGLLVMDRDLGAIRRDDCKVMTKRAPTDAEWEDLLFAWKVVKHVKSNAIVFAKEKRTVGIGGGQTSRVESVKTAVMKAQLELVGSTVGSDAFFPFKDGVEEIIKAGATAIIQPGGSVRDPEVIEAADAANVAMVATGMRHFRH.

Positions 1–144 constitute an MGS-like domain; the sequence is MVRRALVSVS…KNAAHVGVVV (144 aa).

Belongs to the PurH family.

The catalysed reaction is (6R)-10-formyltetrahydrofolate + 5-amino-1-(5-phospho-beta-D-ribosyl)imidazole-4-carboxamide = 5-formamido-1-(5-phospho-D-ribosyl)imidazole-4-carboxamide + (6S)-5,6,7,8-tetrahydrofolate. The enzyme catalyses IMP + H2O = 5-formamido-1-(5-phospho-D-ribosyl)imidazole-4-carboxamide. The protein operates within purine metabolism; IMP biosynthesis via de novo pathway; 5-formamido-1-(5-phospho-D-ribosyl)imidazole-4-carboxamide from 5-amino-1-(5-phospho-D-ribosyl)imidazole-4-carboxamide (10-formyl THF route): step 1/1. It participates in purine metabolism; IMP biosynthesis via de novo pathway; IMP from 5-formamido-1-(5-phospho-D-ribosyl)imidazole-4-carboxamide: step 1/1. In Anaeromyxobacter sp. (strain Fw109-5), this protein is Bifunctional purine biosynthesis protein PurH.